Consider the following 395-residue polypeptide: Flap endonuclease 1 (395 aa).

An N-domain region spans residues 1-104 (MGIKHLYQVI…GELAKRSARK (104 aa)). Position 34 (D34) interacts with Mg(2+). The DNA site is built by R47 and R70. D86 is a binding site for Mg(2+). The tract at residues 99 to 126 (KRSARKREAHEAHEEAKETGTAEDMEKF) is disordered. An I-domain region spans residues 122 to 253 (DMEKFSRRTV…NTALKLIREH (132 aa)). Residues E158, E160, D179, and D181 each coordinate Mg(2+). E158 is a binding site for DNA. Positions 231 and 233 each coordinate DNA. Position 233 (D233) interacts with Mg(2+). Residues 341 to 349 (QQSRLEGFF) are interaction with PCNA. The span at 356–389 (EAEKASLKRKHDEKIEEQKKRKKEEAKAKKEAKA) shows a compositional bias: basic and acidic residues. A disordered region spans residues 356–395 (EAEKASLKRKHDEKIEEQKKRKKEEAKAKKEAKARPRGAV).

The protein belongs to the XPG/RAD2 endonuclease family. FEN1 subfamily. Interacts with PCNA. Three molecules of fen1 bind to one PCNA trimer with each molecule binding to one PCNA monomer. PCNA stimulates the nuclease activity without altering cleavage specificity. Requires Mg(2+) as cofactor. Post-translationally, phosphorylated. Phosphorylation upon DNA damage induces relocalization to the nuclear plasma.

The protein resides in the nucleus. The protein localises to the nucleolus. It is found in the nucleoplasm. Its subcellular location is the mitochondrion. Its function is as follows. Structure-specific nuclease with 5'-flap endonuclease and 5'-3' exonuclease activities involved in DNA replication and repair. During DNA replication, cleaves the 5'-overhanging flap structure that is generated by displacement synthesis when DNA polymerase encounters the 5'-end of a downstream Okazaki fragment. It enters the flap from the 5'-end and then tracks to cleave the flap base, leaving a nick for ligation. Also involved in the long patch base excision repair (LP-BER) pathway, by cleaving within the apurinic/apyrimidinic (AP) site-terminated flap. Acts as a genome stabilization factor that prevents flaps from equilibrating into structures that lead to duplications and deletions. Also possesses 5'-3' exonuclease activity on nicked or gapped double-stranded DNA, and exhibits RNase H activity. Also involved in replication and repair of rDNA and in repairing mitochondrial DNA. This chain is Flap endonuclease 1 (fen1), found in Talaromyces stipitatus (strain ATCC 10500 / CBS 375.48 / QM 6759 / NRRL 1006) (Penicillium stipitatum).